Consider the following 518-residue polypeptide: Protein translocase subunit SecD (518 aa).

6 consecutive transmembrane segments (helical) span residues isoleucine 9 to glutamine 29, leucine 361 to phenylalanine 381, isoleucine 384 to leucine 404, leucine 406 to isoleucine 426, phenylalanine 452 to valine 474, and isoleucine 486 to tryptophan 506.

Belongs to the SecD/SecF family. SecD subfamily. In terms of assembly, forms a complex with SecF. Part of the essential Sec protein translocation apparatus which comprises SecA, SecYEG and auxiliary proteins SecDF-YajC and YidC.

The protein localises to the cell inner membrane. Functionally, part of the Sec protein translocase complex. Interacts with the SecYEG preprotein conducting channel. SecDF uses the proton motive force (PMF) to complete protein translocation after the ATP-dependent function of SecA. The chain is Protein translocase subunit SecD from Rickettsia conorii (strain ATCC VR-613 / Malish 7).